The chain runs to 485 residues: Bifunctional protein GlmU (485 aa).

The segment at 1–241 (MSASDFSSAV…ARELAGVNDR (241 aa)) is pyrophosphorylase. Residues 13–16 (LAAG), lysine 27, glutamine 84, and 89–90 (GT) each bind UDP-N-acetyl-alpha-D-glucosamine. Residue aspartate 114 participates in Mg(2+) binding. UDP-N-acetyl-alpha-D-glucosamine is bound by residues glycine 151, glutamate 166, asparagine 181, and asparagine 239. Asparagine 239 lines the Mg(2+) pocket. Residues 242 to 262 (VQLAEAGAELNRRTVIAAMRG) are linker. Residues 263–485 (GATIVDPATT…AAQNVHNQEG (223 aa)) are N-acetyltransferase. Arginine 344 and lysine 362 together coordinate UDP-N-acetyl-alpha-D-glucosamine. Histidine 374 serves as the catalytic Proton acceptor. UDP-N-acetyl-alpha-D-glucosamine is bound by residues tyrosine 377 and asparagine 388. Acetyl-CoA is bound by residues alanine 391, 397-398 (NY), serine 416, and alanine 434. Positions 465–485 (RPGTAAAQAAEAAQNVHNQEG) are disordered. Residues 469–478 (AAAQAAEAAQ) are compositionally biased toward low complexity.

The protein in the N-terminal section; belongs to the N-acetylglucosamine-1-phosphate uridyltransferase family. It in the C-terminal section; belongs to the transferase hexapeptide repeat family. As to quaternary structure, homotrimer. Mg(2+) is required as a cofactor.

It localises to the cytoplasm. The enzyme catalyses alpha-D-glucosamine 1-phosphate + acetyl-CoA = N-acetyl-alpha-D-glucosamine 1-phosphate + CoA + H(+). It catalyses the reaction N-acetyl-alpha-D-glucosamine 1-phosphate + UTP + H(+) = UDP-N-acetyl-alpha-D-glucosamine + diphosphate. It participates in nucleotide-sugar biosynthesis; UDP-N-acetyl-alpha-D-glucosamine biosynthesis; N-acetyl-alpha-D-glucosamine 1-phosphate from alpha-D-glucosamine 6-phosphate (route II): step 2/2. It functions in the pathway nucleotide-sugar biosynthesis; UDP-N-acetyl-alpha-D-glucosamine biosynthesis; UDP-N-acetyl-alpha-D-glucosamine from N-acetyl-alpha-D-glucosamine 1-phosphate: step 1/1. Its pathway is bacterial outer membrane biogenesis; LPS lipid A biosynthesis. Catalyzes the last two sequential reactions in the de novo biosynthetic pathway for UDP-N-acetylglucosamine (UDP-GlcNAc). The C-terminal domain catalyzes the transfer of acetyl group from acetyl coenzyme A to glucosamine-1-phosphate (GlcN-1-P) to produce N-acetylglucosamine-1-phosphate (GlcNAc-1-P), which is converted into UDP-GlcNAc by the transfer of uridine 5-monophosphate (from uridine 5-triphosphate), a reaction catalyzed by the N-terminal domain. This is Bifunctional protein GlmU from Corynebacterium glutamicum (strain ATCC 13032 / DSM 20300 / JCM 1318 / BCRC 11384 / CCUG 27702 / LMG 3730 / NBRC 12168 / NCIMB 10025 / NRRL B-2784 / 534).